The sequence spans 346 residues: Biotin synthase (346 aa).

The 219-residue stretch at R38–T256 folds into the Radical SAM core domain. 3 residues coordinate [4Fe-4S] cluster: C53, C57, and C60. Residues C97, C128, C188, and R260 each contribute to the [2Fe-2S] cluster site.

The protein belongs to the radical SAM superfamily. Biotin synthase family. In terms of assembly, homodimer. It depends on [4Fe-4S] cluster as a cofactor. Requires [2Fe-2S] cluster as cofactor.

The enzyme catalyses (4R,5S)-dethiobiotin + (sulfur carrier)-SH + 2 reduced [2Fe-2S]-[ferredoxin] + 2 S-adenosyl-L-methionine = (sulfur carrier)-H + biotin + 2 5'-deoxyadenosine + 2 L-methionine + 2 oxidized [2Fe-2S]-[ferredoxin]. It participates in cofactor biosynthesis; biotin biosynthesis; biotin from 7,8-diaminononanoate: step 2/2. Functionally, catalyzes the conversion of dethiobiotin (DTB) to biotin by the insertion of a sulfur atom into dethiobiotin via a radical-based mechanism. This is Biotin synthase from Escherichia coli (strain K12 / DH10B).